The sequence spans 266 residues: Uxu operon regulator (266 aa).

Residues 23 to 91 enclose the HTH gntR-type domain; the sequence is NRTYTRIGQL…KGSGVYVVRT (69 aa). The segment at residues 51–70 is a DNA-binding region (H-T-H motif); sequence EREISEKFGVSRTIVREAMV.

Functionally, repressor for the uxuRBA operon. The polypeptide is Uxu operon regulator (uxuR) (Haemophilus influenzae (strain ATCC 51907 / DSM 11121 / KW20 / Rd)).